Here is a 543-residue protein sequence, read N- to C-terminus: Hydroxylamine reductase (543 aa).

Residues Cys-5, Cys-8, Cys-17, and Cys-23 each coordinate [4Fe-4S] cluster. The hybrid [4Fe-2O-2S] cluster site is built by His-236, Glu-260, Cys-304, Cys-398, Cys-426, Cys-451, Glu-486, and Lys-488. Residue Cys-398 is modified to Cysteine persulfide.

This sequence belongs to the HCP family. It depends on [4Fe-4S] cluster as a cofactor. The cofactor is hybrid [4Fe-2O-2S] cluster.

The protein localises to the cytoplasm. The catalysed reaction is A + NH4(+) + H2O = hydroxylamine + AH2 + H(+). Functionally, catalyzes the reduction of hydroxylamine to form NH(3) and H(2)O. This is Hydroxylamine reductase from Bacteroides fragilis (strain YCH46).